The following is a 158-amino-acid chain: Fucolectin (158 aa).

Residues 16–148 (KATQSAQLRG…TSESLHLCEV (133 aa)) form an F5/8 type C-like region. The Ca(2+) site is built by asparagine 35, aspartate 38, asparagine 40, and serine 49. Intrachain disulfides connect cysteine 50–cysteine 146, cysteine 82–cysteine 83, and cysteine 108–cysteine 124. Residues histidine 52 and arginine 79 each coordinate alpha-L-fucose. Residues 79–81 (RGD) carry the Cell attachment site motif. Arginine 86 provides a ligand contact to alpha-L-fucose. Cysteine 146 and glutamate 147 together coordinate Ca(2+).

Belongs to the fucolectin family. As to quaternary structure, homotrimer.

Its subcellular location is the secreted. Its function is as follows. Acts as a defensive agent. Recognizes blood group fucosylated oligosaccharides including A, B, H and Lewis B-type antigens. Does not recognize Lewis A antigen and has low affinity for monovalent haptens. This is Fucolectin from Anguilla anguilla (European freshwater eel).